The following is a 285-amino-acid chain: 4-diphosphocytidyl-2-C-methyl-D-erythritol kinase (285 aa).

Residue Lys28 is part of the active site. 109 to 119 (PVAAGLGGGSA) lines the ATP pocket. Asp148 is an active-site residue.

This sequence belongs to the GHMP kinase family. IspE subfamily.

The catalysed reaction is 4-CDP-2-C-methyl-D-erythritol + ATP = 4-CDP-2-C-methyl-D-erythritol 2-phosphate + ADP + H(+). The protein operates within isoprenoid biosynthesis; isopentenyl diphosphate biosynthesis via DXP pathway; isopentenyl diphosphate from 1-deoxy-D-xylulose 5-phosphate: step 3/6. Its function is as follows. Catalyzes the phosphorylation of the position 2 hydroxy group of 4-diphosphocytidyl-2C-methyl-D-erythritol. The polypeptide is 4-diphosphocytidyl-2-C-methyl-D-erythritol kinase (Novosphingobium aromaticivorans (strain ATCC 700278 / DSM 12444 / CCUG 56034 / CIP 105152 / NBRC 16084 / F199)).